The sequence spans 429 residues: 26S proteasome regulatory subunit 6A homolog (429 aa).

Positions 1-21 are disordered; that stretch reads MSSPPPAAAAAMAVDDADDDQ. 217 to 224 contributes to the ATP binding site; sequence GPPGTGKT.

The protein belongs to the AAA ATPase family.

The protein resides in the cytoplasm. The protein localises to the nucleus. In terms of biological role, the 26S proteasome is involved in the ATP-dependent degradation of ubiquitinated proteins. The regulatory (or ATPase) complex confers ATP dependency and substrate specificity to the 26S complex. The chain is 26S proteasome regulatory subunit 6A homolog (TBP1) from Oryza sativa subsp. japonica (Rice).